The primary structure comprises 237 residues: Phosphoglycolate phosphatase (237 aa).

Residue aspartate 15 is the Nucleophile of the active site. The Mg(2+) site is built by aspartate 15, aspartate 17, and aspartate 177.

The protein belongs to the HAD-like hydrolase superfamily. CbbY/CbbZ/Gph/YieH family. Mg(2+) is required as a cofactor.

It catalyses the reaction 2-phosphoglycolate + H2O = glycolate + phosphate. The protein operates within organic acid metabolism; glycolate biosynthesis; glycolate from 2-phosphoglycolate: step 1/1. Specifically catalyzes the dephosphorylation of 2-phosphoglycolate. Is involved in the dissimilation of the intracellular 2-phosphoglycolate formed during the DNA repair of 3'-phosphoglycolate ends, a major class of DNA lesions induced by oxidative stress. This is Phosphoglycolate phosphatase from Caulobacter vibrioides (strain ATCC 19089 / CIP 103742 / CB 15) (Caulobacter crescentus).